Consider the following 1733-residue polypeptide: Protein NETWORKED 1D (1733 aa).

In terms of domain architecture, NAB spans 12-92 (YSWWWDSHIS…ERYDHATGVI (81 aa)). 4 coiled-coil regions span residues 195–816 (KEIN…RESS), 897–931 (LIAE…QIDS), 960–1043 (DENS…QKLI), and 1196–1386 (ARSA…NDLM). Positions 1456–1476 (LKTSSARRSRRRNGSLRKQNH) are disordered. Residues 1460-1470 (SARRSRRRNGS) are compositionally biased toward basic residues. 2 coiled-coil regions span residues 1553–1627 (ANKR…KVQN) and 1653–1686 (SEQA…DRED). Residues 1628-1656 (GFERSDGSKSSMDLDENESSRRRRISEQA) form a disordered region.

The protein belongs to the NET family.

In terms of biological role, plant-specific actin binding protein. May be part of a membrane-cytoskeletal adapter complex. This chain is Protein NETWORKED 1D, found in Arabidopsis thaliana (Mouse-ear cress).